Consider the following 1063-residue polypeptide: JmjC domain-containing histone demethylation protein 1 (1063 aa).

A JmjC domain is found at 86 to 266 (LYNVLSLEYS…TQLRVYQVEN (181 aa)). Thr160 contributes to the substrate binding site. The Fe cation site is built by His163 and Asp165. Lys180 serves as a coordination point for substrate. His234 is a Fe cation binding site. The span at 379–389 (GLEEEAEDEDV) shows a compositional bias: acidic residues. Disordered regions lie at residues 379-400 (GLEE…AEER), 554-750 (ESDE…NPYN), and 776-1040 (VELH…KRAK). The span at 390–400 (KPETKKEAEER) shows a compositional bias: basic and acidic residues. 2 stretches are compositionally biased toward acidic residues: residues 594-605 (PEYDEDMEEYDP) and 613-631 (ELEE…EEEY). Low complexity predominate over residues 636-646 (TRRSSTRGSAS). Basic and acidic residues-rich tracts occupy residues 647-665 (TKEE…PKKE), 674-712 (EKSS…ELRA), 776-806 (VELH…HEDS), 813-835 (PYDR…DSHR), and 892-902 (EPRRSNDRRTS). Low complexity predominate over residues 926–937 (AEAASASSSRHS). Polar residues-rich tracts occupy residues 950–963 (LNSS…TPMY) and 973–982 (WLPNTSNVTR). Pro residues predominate over residues 1005 to 1016 (PPFPRSITPPPV). A compositionally biased stretch (polar residues) spans 1020 to 1030 (ELKSQSNGRKS). Basic and acidic residues predominate over residues 1031 to 1040 (NYSEDGKRAK).

This sequence belongs to the JHDM1 histone demethylase family. The cofactor is Fe(2+).

It localises to the nucleus. The catalysed reaction is N(6),N(6)-dimethyl-L-lysyl(36)-[histone H3] + 2 2-oxoglutarate + 2 O2 = L-lysyl(36)-[histone H3] + 2 formaldehyde + 2 succinate + 2 CO2. Histone demethylase that specifically demethylates 'Lys-36' of histone H3, thereby playing a central role in histone code. The sequence is that of JmjC domain-containing histone demethylation protein 1 (jhdm-1) from Caenorhabditis briggsae.